The primary structure comprises 76 residues: uncharacterized protein (76 aa).

Residues 36 to 41 (PDIIIT) form a required for interaction with PPP3CA region. A phosphothreonine mark is found at T44 and T46.

Interacts (via PxIxIT motif, when phosphorylated on Thr-44) with PPP3CA. As to expression, not expressed in pancreatic duct cells (at protein level). Abundantly expressed in the pancreas and weakly expressed in the thyroid. In terms of tissue distribution, not expressed in pancreatic duct cells (at protein level). Abundantly expressed in the lymph node and weakly expressed in the stomach, trachea and bone marrow.

This is an uncharacterized protein from Homo sapiens (Human).